A 310-amino-acid polypeptide reads, in one-letter code: Fe-S cluster assembly protein dre2 (310 aa).

2 disordered regions span residues 1 to 30 (MAPS…GKRT) and 165 to 184 (APAP…DDND). Positions 24 to 154 (ADSGKRTLLL…KMDVGNGAAV (131 aa)) are N-terminal SAM-like domain. The segment at 155 to 202 (PLRLGRKKKAAPAPAPVVQPPPIISSDDNDLNDDELIDEDTLLSADDL) is linker. The span at 167-177 (APAPVVQPPPI) shows a compositional bias: pro residues. The [2Fe-2S] cluster site is built by C212, C223, C226, and C228. The tract at residues 212–228 (CQPKAGKRRRACKDCTC) is fe-S binding site A. Residues C273, C276, C284, and C287 each contribute to the [4Fe-4S] cluster site. 2 short sequence motifs (cx2C motif) span residues 273-276 (CGNC) and 284-287 (CDGC). The interval 273–287 (CGNCALGDAFRCDGC) is fe-S binding site B.

This sequence belongs to the anamorsin family. As to quaternary structure, monomer. Interacts with tah18. Interacts with mia40. Requires [2Fe-2S] cluster as cofactor. [4Fe-4S] cluster is required as a cofactor.

It localises to the cytoplasm. It is found in the mitochondrion intermembrane space. Its function is as follows. Component of the cytosolic iron-sulfur (Fe-S) protein assembly (CIA) machinery required for the maturation of extramitochondrial Fe-S proteins. Part of an electron transfer chain functioning in an early step of cytosolic Fe-S biogenesis, facilitating the de novo assembly of a [4Fe-4S] cluster on the scaffold complex cfd1-nbp35. Electrons are transferred to dre2 from NADPH via the FAD- and FMN-containing protein tah18. Tah18-dre2 are also required for the assembly of the diferric tyrosyl radical cofactor of ribonucleotide reductase (RNR), probably by providing electrons for reduction during radical cofactor maturation in the catalytic small subunit rnr2. The sequence is that of Fe-S cluster assembly protein dre2 from Emericella nidulans (strain FGSC A4 / ATCC 38163 / CBS 112.46 / NRRL 194 / M139) (Aspergillus nidulans).